The chain runs to 332 residues: Adenosine deaminase (332 aa).

Residues histidine 12 and histidine 14 each contribute to the Zn(2+) site. Substrate contacts are provided by histidine 14, aspartate 16, and glycine 170. Histidine 197 serves as a coordination point for Zn(2+). The active-site Proton donor is the glutamate 200. Residue aspartate 278 coordinates Zn(2+).

The protein belongs to the metallo-dependent hydrolases superfamily. Adenosine and AMP deaminases family. Adenosine deaminase subfamily. Requires Zn(2+) as cofactor.

The enzyme catalyses adenosine + H2O + H(+) = inosine + NH4(+). It carries out the reaction 2'-deoxyadenosine + H2O + H(+) = 2'-deoxyinosine + NH4(+). Its function is as follows. Catalyzes the hydrolytic deamination of adenosine and 2-deoxyadenosine. This is Adenosine deaminase from Clostridium perfringens (strain 13 / Type A).